Here is a 143-residue protein sequence, read N- to C-terminus: Hemoglobin subunit alpha-1 (143 aa).

Position 2 is an N-acetylserine (serine 2). A Globin domain is found at 2–143 (SLSTKDKETV…VSLALAEKYR (142 aa)). Histidine 60 is an O2 binding site. Residue histidine 89 participates in heme b binding.

Belongs to the globin family. As to quaternary structure, hb1 is a heterotetramer of two alpha-1 chains and two beta-1 chains. Red blood cells.

Functionally, involved in oxygen transport from gills to the various peripheral tissues. The chain is Hemoglobin subunit alpha-1 from Liparis tunicatus (Kelp snailfish).